The following is a 669-amino-acid chain: Epithelial sodium channel subunit gamma (669 aa).

Residues 1 to 67 lie on the Cytoplasmic side of the membrane; the sequence is MAPPYHGDTR…VVSRGRLRKF (67 aa). A helical transmembrane segment spans residues 68–88; the sequence is IWILLTLSAVGLILWQCAELI. Over 89–551 the chain is Extracellular; the sequence is MSYYTASVSV…VILLSNFGGQ (463 aa). Intrachain disulfides connect C113/C300, C223/C231, C277/C284, C389/C474, C411/C470, C415/C466, C424/C451, and C426/C440. The helical transmembrane segment at 552 to 572 threads the bilayer; the sequence is LGLWMSCSMVCVIEIIEVFFI. The Cytoplasmic segment spans residues 573 to 669; the sequence is DSFSIVMRRR…LPDTLEGRSH (97 aa). The tract at residues 592–619 is disordered; it reads DRKAPRPQEPPQVNAPAKEGHDNPVCTD.

This sequence belongs to the amiloride-sensitive sodium channel (TC 1.A.6) family. SCNN1G subfamily. As to quaternary structure, component of the heterotrimeric epithelial sodium channel (ENaC) composed of an alpha/SCNN1A, a beta/SCNN1B and a gamma/SCNN1G subunit.

It localises to the apical cell membrane. It carries out the reaction Na(+)(in) = Na(+)(out). Originally identified and characterized by its inhibition by the diuretic drug amiloride. Functionally, this is one of the three pore-forming subunits of the heterotrimeric epithelial sodium channel (ENaC), a critical regulator of sodium balance and fluid homeostasis. ENaC operates in epithelial tissues, where it mediates the electrodiffusion of sodium ions from extracellular fluid through the apical membrane of cells, with water following osmotically. This is Epithelial sodium channel subunit gamma from Pelodiscus sinensis (Chinese softshell turtle).